The primary structure comprises 92 residues: Small ribosomal subunit protein uS19 (92 aa).

The protein belongs to the universal ribosomal protein uS19 family.

Functionally, protein S19 forms a complex with S13 that binds strongly to the 16S ribosomal RNA. This chain is Small ribosomal subunit protein uS19, found in Geobacillus sp. (strain WCH70).